The chain runs to 154 residues: Myoglobin (154 aa).

Residues 2-148 enclose the Globin domain; the sequence is GLSDGEWQLV…FRNDMAAKYK (147 aa). Phosphoserine is present on Ser4. His65 lines the nitrite pocket. His65 lines the O2 pocket. At Thr68 the chain carries Phosphothreonine. Residue His94 coordinates heme b.

It belongs to the globin family. In terms of assembly, monomeric.

The protein localises to the cytoplasm. Its subcellular location is the sarcoplasm. The catalysed reaction is Fe(III)-heme b-[protein] + nitric oxide + H2O = Fe(II)-heme b-[protein] + nitrite + 2 H(+). It catalyses the reaction H2O2 + AH2 = A + 2 H2O. Functionally, monomeric heme protein which primary function is to store oxygen and facilitate its diffusion within muscle tissues. Reversibly binds oxygen through a pentacoordinated heme iron and enables its timely and efficient release as needed during periods of heightened demand. Depending on the oxidative conditions of tissues and cells, and in addition to its ability to bind oxygen, it also has a nitrite reductase activity whereby it regulates the production of bioactive nitric oxide. Under stress conditions, like hypoxia and anoxia, it also protects cells against reactive oxygen species thanks to its pseudoperoxidase activity. This chain is Myoglobin (MB), found in Lagothrix lagotricha (Brown woolly monkey).